Consider the following 43-residue polypeptide: Protein PsbN (43 aa).

A helical transmembrane segment spans residues 5–25; that stretch reads TVLSIFISSLLLGITIYSIYI.

The protein belongs to the PsbN family.

It localises to the plastid. It is found in the chloroplast thylakoid membrane. In terms of biological role, may play a role in photosystem I and II biogenesis. This Gracilaria tenuistipitata var. liui (Red alga) protein is Protein PsbN.